The sequence spans 239 residues: 2,3,4,5-tetrahydropyridine-2,6-dicarboxylate N-acetyltransferase (239 aa).

The protein belongs to the transferase hexapeptide repeat family. DapH subfamily.

The enzyme catalyses (S)-2,3,4,5-tetrahydrodipicolinate + acetyl-CoA + H2O = L-2-acetamido-6-oxoheptanedioate + CoA. The protein operates within amino-acid biosynthesis; L-lysine biosynthesis via DAP pathway; LL-2,6-diaminopimelate from (S)-tetrahydrodipicolinate (acetylase route): step 1/3. Its function is as follows. Catalyzes the transfer of an acetyl group from acetyl-CoA to tetrahydrodipicolinate. In Staphylococcus saprophyticus subsp. saprophyticus (strain ATCC 15305 / DSM 20229 / NCIMB 8711 / NCTC 7292 / S-41), this protein is 2,3,4,5-tetrahydropyridine-2,6-dicarboxylate N-acetyltransferase.